Reading from the N-terminus, the 396-residue chain is Phosphoglycerate kinase (396 aa).

Residues 21–23 (DFN), Arg-36, 59–62 (HLGK), Arg-119, and Arg-156 contribute to the substrate site. ATP is bound by residues Lys-206, Glu-325, and 352-355 (GGDS).

The protein belongs to the phosphoglycerate kinase family. In terms of assembly, monomer.

Its subcellular location is the cytoplasm. The catalysed reaction is (2R)-3-phosphoglycerate + ATP = (2R)-3-phospho-glyceroyl phosphate + ADP. The protein operates within carbohydrate degradation; glycolysis; pyruvate from D-glyceraldehyde 3-phosphate: step 2/5. This chain is Phosphoglycerate kinase, found in Staphylococcus epidermidis (strain ATCC 35984 / DSM 28319 / BCRC 17069 / CCUG 31568 / BM 3577 / RP62A).